Reading from the N-terminus, the 155-residue chain is Cyanate hydratase (155 aa).

Residues Arg-95, Glu-98, and Ser-121 contribute to the active site.

It belongs to the cyanase family.

It catalyses the reaction cyanate + hydrogencarbonate + 3 H(+) = NH4(+) + 2 CO2. In terms of biological role, catalyzes the reaction of cyanate with bicarbonate to produce ammonia and carbon dioxide. The chain is Cyanate hydratase from Pseudomonas syringae pv. syringae (strain B728a).